Here is a 369-residue protein sequence, read N- to C-terminus: Probable N-acetyltransferase 16 (369 aa).

A disordered region spans residues 1 to 49 (MKLEASCGTATSEVPKPEKKTARDAEPSSETRPQEVEAEPRSGSGPEAE). Over residues 15 to 26 (PKPEKKTARDAE) the composition is skewed to basic and acidic residues. The 136-residue stretch at 53 to 188 (LDFVVATERE…QGILLVRFNA (136 aa)) folds into the N-acetyltransferase domain.

Functionally, probable N-acetyltransferase. Shows only trace activity toward L-His and no N-acetyltransferase activity toward other amino acids. The physiological substrate of this enzyme is unknown. The sequence is that of Probable N-acetyltransferase 16 (NAT16) from Homo sapiens (Human).